The sequence spans 353 residues: UDP-3-O-acylglucosamine N-acyltransferase (353 aa).

His-246 serves as the catalytic Proton acceptor.

Belongs to the transferase hexapeptide repeat family. LpxD subfamily. In terms of assembly, homotrimer.

It catalyses the reaction a UDP-3-O-[(3R)-3-hydroxyacyl]-alpha-D-glucosamine + a (3R)-hydroxyacyl-[ACP] = a UDP-2-N,3-O-bis[(3R)-3-hydroxyacyl]-alpha-D-glucosamine + holo-[ACP] + H(+). The protein operates within bacterial outer membrane biogenesis; LPS lipid A biosynthesis. Functionally, catalyzes the N-acylation of UDP-3-O-acylglucosamine using 3-hydroxyacyl-ACP as the acyl donor. Is involved in the biosynthesis of lipid A, a phosphorylated glycolipid that anchors the lipopolysaccharide to the outer membrane of the cell. The sequence is that of UDP-3-O-acylglucosamine N-acyltransferase from Chlorobaculum tepidum (strain ATCC 49652 / DSM 12025 / NBRC 103806 / TLS) (Chlorobium tepidum).